The chain runs to 166 residues: uncharacterized protein (166 aa).

3 consecutive Pentapeptide repeat domains span residues 38–77 (GECLDCNLAGADLREFNLENARLNRSDLSGANLSGVNLRR), 78–117 (ALLDRANLTGANLSETDLTEAALTEANLAGADLSGANLER), and 118–157 (SFLRDVDLTGANLKGANLAWANLTAANLTDVDLEEAEFWE).

This is an uncharacterized protein from Synechocystis sp. (strain ATCC 27184 / PCC 6803 / Kazusa).